A 730-amino-acid chain; its full sequence is Transcription factor verF (730 aa).

Residues 19-41 (YECSLCLKRYKRREHLFRHIGSH) form a C2H2-type 1 zinc finger. The C2H2-type 2; atypical zinc finger occupies 47–69 (YQCNSCDGAFQRADVLKRHLRTC). Positions 83–109 (CDRCVRQKKACSSHQPCHSCAKKGAQC) form a DNA-binding region, zn(2)-C6 fungal-type. Over residues 120 to 129 (RLSQHSSTNH) the composition is skewed to polar residues. Residues 120 to 151 (RLSQHSSTNHTPKDQELSTQFTNPPPPPSTST) form a disordered region.

The protein localises to the nucleus. In terms of biological role, transcription factor; part of the gene cluster that mediates the biosynthesis of the neurotoxin verrucosidin, a methylated alpha-pyrone polyketide that inhibits oxidative phosphorylation in mitochondria and thereby causes neurological diseases. The sequence is that of Transcription factor verF from Penicillium polonicum.